A 258-amino-acid chain; its full sequence is Probable S-methyl-5'-thioinosine phosphorylase (258 aa).

53–54 is a phosphate binding site; the sequence is RH. A substrate-binding site is contributed by M180. A phosphate-binding site is contributed by T181. 204–206 is a binding site for substrate; that stretch reads NQA.

The protein belongs to the PNP/MTAP phosphorylase family. MTAP subfamily. Homotrimer.

It carries out the reaction S-methyl-5'-thioinosine + phosphate = 5-(methylsulfanyl)-alpha-D-ribose 1-phosphate + hypoxanthine. Its pathway is purine metabolism; purine nucleoside salvage. Its function is as follows. Catalyzes the reversible phosphorylation of S-methyl-5'-thioinosine (MTI) to hypoxanthine and 5-methylthioribose-1-phosphate. Involved in the breakdown of S-methyl-5'-thioadenosine (MTA), a major by-product of polyamine biosynthesis. Catabolism of (MTA) occurs via deamination to MTI and phosphorolysis to hypoxanthine. The chain is Probable S-methyl-5'-thioinosine phosphorylase from Methanosarcina acetivorans (strain ATCC 35395 / DSM 2834 / JCM 12185 / C2A).